Reading from the N-terminus, the 526-residue chain is MKQCTRQCILIIDFGSQYTQLLLRRIRELGIYAKVCDWNISQDLLVSLNPNGIIFSGGPDSVTNKHSSSISKVVFKIGVPILGICYGMQILVSQCGGNIRSVSNKGEFGYAQVEILSQKNTLIGNLYDYINDQGHCVLEVWMSHKDIVETMPQGFTVIGITENQQIAIIINEKCRWYGIQFHPEVTHTKKGKDILKRFAVDICRCEVTWKPVYIVKNIIKTIKKVVGQDRVVLAFSGGIDSLVTALLLKYAINHEQFVCVFVNNGLLCCNEINRISNFCKKYQDLNIIHLSEEKRFLSALTGVIDPEEKRKIIGKIFVEIFQAQISQLKNIKWLAQGTIYSDVIESGMSCASANIIKSHHNVGGFPSSVNIQLLEPIKDLFKDEVRNIGLYLGLPLNVVNQYPCPGPGMAIRILGEVREEYCNILRRVDYIFMEELNKSDLYNTVDQAFAVFLPVQSVGVQGDQRKYKWVIVLRAIETEDFMTAQWVRLPYTFLNKVSNRIVNEVEEVSRVVYDISCKPPATIEWE.

Residues 8 to 208 (CILIIDFGSQ…AVDICRCEVT (201 aa)) enclose the Glutamine amidotransferase type-1 domain. Cysteine 85 serves as the catalytic Nucleophile. Active-site residues include histidine 182 and glutamate 184. Residues 209 to 401 (WKPVYIVKNI…LGLPLNVVNQ (193 aa)) form the GMPS ATP-PPase domain. Residue 236–242 (SGGIDSL) participates in ATP binding.

Homodimer.

The catalysed reaction is XMP + L-glutamine + ATP + H2O = GMP + L-glutamate + AMP + diphosphate + 2 H(+). It participates in purine metabolism; GMP biosynthesis; GMP from XMP (L-Gln route): step 1/1. Its function is as follows. Catalyzes the synthesis of GMP from XMP. In Blochmanniella floridana, this protein is GMP synthase [glutamine-hydrolyzing].